The sequence spans 509 residues: Cytochrome P450 monooxygenase AFT11-1 (509 aa).

Position 432 (C432) interacts with heme.

Belongs to the cytochrome P450 family. The cofactor is heme.

It participates in mycotoxin biosynthesis. Functionally, cytochrome P450 monooxygenase; part of the gene clusters that mediate the biosynthesis of the host-selective toxins (HSTs) AF-toxins responsible for Alternaria black spot of strawberry disease by the strawberry pathotype. AF-toxin I and III are valine derivatives of 2,3-dyhydroxy-isovaleric acid and 2-hydroxy-isovaleric acid respectively, while AF II is an isoleucine derivative of 2-hydroxy-valeric acid. These derivatives are bound to a 9,10-epoxy-8-hydroxy-9-methyl-decatrienoic acid (EDA) moiety. On cellular level, AF-toxins affect plasma membrane of susceptible cells and cause a sudden increase in loss of K(+) after a few minutes of toxin treatment. The aldo-keto reductase AFTS1 catalyzes the conversion of 2-keto-isovaleric acid (2-KIV) to 2-hydroxy-isovaleric acid (2-HIV) by reduction of its ketone to an alcohol. The acyl-CoA ligase AFT1, the hydrolase AFT2 and the enoyl-CoA hydratases AFT3 and AFT6, but also the polyketide synthase AFT9, the acyl-CoA dehydrogenase AFT10, the cytochrome P450 monooxygenase AFT11 and the oxidoreductase AFT12 are all involved in the biosynthesis of the AK-, AF- and ACT-toxin common EDA structural moiety. The exact function of each enzyme, and of additional enzymes identified within the AF-toxin clusters have still to be determined. This is Cytochrome P450 monooxygenase AFT11-1 from Alternaria alternata (Alternaria rot fungus).